Reading from the N-terminus, the 586-residue chain is Anaerobic glycerol-3-phosphate dehydrogenase subunit A1 (586 aa).

Residue 6 to 34 (SVLVIGGGSTGTGIARDLAMRGLDVTLVE) participates in FAD binding. Positions 559 to 586 (GGAVADGGRERAADRADDDALGGADGDN) are disordered. Over residues 574–586 (ADDDALGGADGDN) the composition is skewed to acidic residues.

It belongs to the FAD-dependent glycerol-3-phosphate dehydrogenase family. Composed of a catalytic GlpA/B dimer and of membrane bound GlpC. Requires FAD as cofactor. It depends on FMN as a cofactor.

The protein resides in the cell membrane. The enzyme catalyses a quinone + sn-glycerol 3-phosphate = dihydroxyacetone phosphate + a quinol. It participates in polyol metabolism; glycerol degradation via glycerol kinase pathway; glycerone phosphate from sn-glycerol 3-phosphate (anaerobic route): step 1/1. Up-regulated by glycerol and no inhibition by glucose. In terms of biological role, conversion of glycerol 3-phosphate to dihydroxyacetone phosphate. Required for growth on glycerol and for glycerol metabolism. The chain is Anaerobic glycerol-3-phosphate dehydrogenase subunit A1 (gpdA1) from Haloferax volcanii (strain ATCC 29605 / DSM 3757 / JCM 8879 / NBRC 14742 / NCIMB 2012 / VKM B-1768 / DS2) (Halobacterium volcanii).